A 137-amino-acid polypeptide reads, in one-letter code: Fluoride-specific ion channel FluC 4 (137 aa).

Transmembrane regions (helical) follow at residues Ala-20–Ala-40, Leu-43–Leu-63, Gly-83–Leu-103, and Ala-110–Ile-130. Na(+) contacts are provided by Gly-86 and Thr-89.

The protein belongs to the fluoride channel Fluc/FEX (TC 1.A.43) family.

Its subcellular location is the cell inner membrane. The enzyme catalyses fluoride(in) = fluoride(out). Na(+) is not transported, but it plays an essential structural role and its presence is essential for fluoride channel function. Its function is as follows. Fluoride-specific ion channel. Important for reducing fluoride concentration in the cell, thus reducing its toxicity. The chain is Fluoride-specific ion channel FluC 4 from Brucella suis biovar 1 (strain 1330).